The primary structure comprises 953 residues: Probable LRR receptor-like serine/threonine-protein kinase At1g53420 (953 aa).

The signal sequence occupies residues 1 to 22 (MSLNRFLFTSFSFFLFFIVHFA). Residues 23 to 566 (SSATLPTQEG…SPRNGMSTGT (544 aa)) are Extracellular-facing. 6 LRR repeats span residues 63 to 86 (WSTI…LVGL), 88 to 110 (LLQE…WGVL), 111 to 132 (PLVN…EFGN), 135 to 158 (TLTS…GNLP), 159 to 182 (NIQQ…AKLT), and 183 to 205 (TLRD…IQKW). N-linked (GlcNAc...) asparagine glycosylation is found at asparagine 100 and asparagine 132. N-linked (GlcNAc...) asparagine glycans are attached at residues asparagine 265, asparagine 315, asparagine 335, asparagine 378, and asparagine 423. Residues 567 to 587 (LHTLVVILSIFIVFLVFGTLW) form a helical membrane-spanning segment. The Cytoplasmic segment spans residues 588–953 (KKGYLRSKSQ…SDRSESSADH (366 aa)). The 278-residue stretch at 624 to 901 (FDSANRIGEG…VKMLEGKKMV (278 aa)) folds into the Protein kinase domain. ATP-binding positions include 630 to 638 (IGEGGFGPV) and lysine 652. Tyrosine 697 bears the Phosphotyrosine mark. The active-site Proton acceptor is aspartate 750. Serine 783 carries the phosphoserine modification. 2 positions are modified to phosphothreonine: threonine 784 and threonine 789. Tyrosine 797 carries the post-translational modification Phosphotyrosine.

This sequence belongs to the protein kinase superfamily. Ser/Thr protein kinase family.

The protein resides in the membrane. The enzyme catalyses L-seryl-[protein] + ATP = O-phospho-L-seryl-[protein] + ADP + H(+). It catalyses the reaction L-threonyl-[protein] + ATP = O-phospho-L-threonyl-[protein] + ADP + H(+). This is Probable LRR receptor-like serine/threonine-protein kinase At1g53420 from Arabidopsis thaliana (Mouse-ear cress).